The primary structure comprises 200 residues: Small ribosomal subunit protein uS4 (200 aa).

Residues 91–150 (TRLDNVVYRLGITPTRRSARQLVSHKHITVNGKIVNIPSYALKVGDIIGLTEKTKSSNAI) form the S4 RNA-binding domain.

The protein belongs to the universal ribosomal protein uS4 family. In terms of assembly, part of the 30S ribosomal subunit. Contacts protein S5. The interaction surface between S4 and S5 is involved in control of translational fidelity.

Functionally, one of the primary rRNA binding proteins, it binds directly to 16S rRNA where it nucleates assembly of the body of the 30S subunit. Its function is as follows. With S5 and S12 plays an important role in translational accuracy. In Amoebophilus asiaticus (strain 5a2), this protein is Small ribosomal subunit protein uS4.